Consider the following 524-residue polypeptide: Phytoene desaturase (neurosporene-forming) (524 aa).

12–45 contributes to the FAD binding site; that stretch reads VVIGAGLGGLAAAMRLGAKGYKVTVVDRLDRPGG. Positions 500 to 524 are disordered; the sequence is PDAPKPETPAAAAPKARTPRAKAAQ. Low complexity predominate over residues 507–524; that stretch reads TPAAAAPKARTPRAKAAQ.

Belongs to the carotenoid/retinoid oxidoreductase family. The cofactor is FAD.

It carries out the reaction 15-cis-phytoene + 3 A = all-trans-neurosporene + 3 AH2. It participates in carotenoid biosynthesis. Is inhibited by diphenylamine (DPA). Is also slightly inhibited by NAD, NADP or ATP in the presence of FAD. Its function is as follows. Converts phytoene into all-trans-neurosporene as the major product, via the intermediary of phytofluene and zeta-carotene, by the introduction of three double bonds. Both intermediates, phytofluene and zeta-carotene, can be used as substrates and converted to neurosporene. 1,2-epoxy phytoene is also a suitable substrate whereas the C30 diapophytoene is not. In Rhodobacter capsulatus (strain ATCC BAA-309 / NBRC 16581 / SB1003), this protein is Phytoene desaturase (neurosporene-forming) (crtI).